The following is a 154-amino-acid chain: Ribosome maturation factor RimP (154 aa).

The protein belongs to the RimP family.

Its subcellular location is the cytoplasm. In terms of biological role, required for maturation of 30S ribosomal subunits. In Clostridium perfringens (strain ATCC 13124 / DSM 756 / JCM 1290 / NCIMB 6125 / NCTC 8237 / Type A), this protein is Ribosome maturation factor RimP.